Reading from the N-terminus, the 370-residue chain is Translocating chain-associated membrane protein 2 (370 aa).

At 1–22 (MAFRRRTKSYPLFSQEFIIHNH) the chain is on the cytoplasmic side. A helical membrane pass occupies residues 23-43 (ADIGFCLVLCVLIGLMFEVTA). Topologically, residues 44–75 (KTAFLFILPQYNISVPTADSETVHYHYGPKDL) are extracellular. Asn55 carries N-linked (GlcNAc...) asparagine glycosylation. The helical transmembrane segment at 76 to 96 (VTILFYVVITIIFHAVVQEYI) threads the bilayer. Topologically, residues 97-119 (LDKISKRLHLSKVKHSKFNESGQ) are cytoplasmic. In terms of domain architecture, TLC spans 112-321 (SKFNESGQLL…HSQLRHWREY (210 aa)). A helical transmembrane segment spans residues 120-140 (LLVFHLSAVAWCFYVIVTEGY). At 141–159 (LTNPRSLWEDYPHVYLSFQ) the chain is on the extracellular side. A helical transmembrane segment spans residues 160–180 (VKFFYLGQLAYWLHSLPELYF). Residues 181–191 (QKVRKEEVPRQ) are Cytoplasmic-facing. Residues 192 to 209 (LQYICLYLLHITGAYLLN) form a helical membrane-spanning segment. Topologically, residues 210-214 (LSRLG) are extracellular. Residues 215–235 (LILLLLQYSTEALFHMARLFH) form a helical membrane-spanning segment. The Cytoplasmic segment spans residues 236–250 (FADENNERLFNAWAA). A helical transmembrane segment spans residues 251–271 (VFGVTRLFILTLAVLTIGFGL). The Extracellular portion of the chain corresponds to 272 to 287 (ARVENQVFDPEKGNFN). Residues 288–308 (TLPCRLGMLLLVCVAQAWLMW) form a helical membrane-spanning segment. Topologically, residues 309 to 370 (RFIHSQLRHW…SSRTKKLKSP (62 aa)) are cytoplasmic. Residues 332–370 (SAVPRPPAKLLKREPGYHENGVVKAENGTSSRTKKLKSP) are disordered.

It belongs to the TRAM family. As to quaternary structure, interacts with COL1A1. Interacts with SERCA2B.

Its subcellular location is the membrane. In terms of biological role, necessary for collagen type I synthesis. May couple the activity of the ER Ca(2+) pump SERCA2B with the activity of the translocon. This coupling may increase the local Ca(2+) concentration at the site of collagen synthesis, and a high Ca(2+) concentration may be necessary for the function of molecular chaperones involved in collagen folding. Required for proper insertion of the first transmembrane helix N-terminus of TM4SF20 into the ER lumen, may act as a ceramide sensor for regulated alternative translocation (RAT). This is Translocating chain-associated membrane protein 2 (Tram2) from Mus musculus (Mouse).